A 156-amino-acid chain; its full sequence is Ribosome maturation factor RimP (156 aa).

It belongs to the RimP family.

The protein resides in the cytoplasm. In terms of biological role, required for maturation of 30S ribosomal subunits. The sequence is that of Ribosome maturation factor RimP from Microcystis aeruginosa (strain NIES-843 / IAM M-2473).